Here is a 331-residue protein sequence, read N- to C-terminus: Meiotic recombination protein W68 (331 aa).

Residues 1-120 enclose the Topo IIA-type catalytic domain; it reads MDEFSENIER…LGILAASKGL (120 aa). The active-site O-(5'-phospho-DNA)-tyrosine intermediate is Tyr-81. Residues Glu-167 and Asp-221 each contribute to the Mg(2+) site.

The protein belongs to the TOP6A family. Mg(2+) serves as cofactor.

The protein resides in the nucleus. It catalyses the reaction ATP-dependent breakage, passage and rejoining of double-stranded DNA.. Required for meiotic recombination. Together with mei-P22, mediates DNA cleavage that forms the double-strand breaks (DSB) that initiate meiotic recombination. The chain is Meiotic recombination protein W68 from Drosophila melanogaster (Fruit fly).